The following is a 242-amino-acid chain: Small ribosomal subunit protein uS2 (242 aa).

This sequence belongs to the universal ribosomal protein uS2 family.

This is Small ribosomal subunit protein uS2 from Vibrio parahaemolyticus serotype O3:K6 (strain RIMD 2210633).